The primary structure comprises 334 residues: Sensor protein BceS (334 aa).

The Cytoplasmic portion of the chain corresponds to 1–12; it reads MIKAFLIERRSW. The chain crosses the membrane as a helical span at residues 13-33; sequence IAAFLFQQALMLFIAFVDPSI. Serine 34 is a topological domain (extracellular). The chain crosses the membrane as a helical span at residues 35-55; sequence FGNVLYMVYLCILFFIIFLWF. The Cytoplasmic segment spans residues 56 to 334; that stretch reads RYRKETAFYK…RNQFEHVISV (279 aa). The 206-residue stretch at 121 to 326 folds into the Histidine kinase domain; the sequence is AWIHEVKTPL…VFTLTFPIRN (206 aa). Phosphohistidine; by autocatalysis is present on histidine 124.

The protein resides in the cell membrane. It catalyses the reaction ATP + protein L-histidine = ADP + protein N-phospho-L-histidine.. Member of the two-component regulatory system BceS/BceR involved in the regulation of bacitracin resistance. Activates BceR in response to extracellular bacitracin. The sequence is that of Sensor protein BceS (bceS) from Bacillus subtilis (strain 168).